A 640-amino-acid polypeptide reads, in one-letter code: tRNA-dihydrouridine(47) synthase [NAD(P)(+)]-like (640 aa).

Over residues 1-10 (MAEVAEVAAE) the composition is skewed to low complexity. Disordered regions lie at residues 1–22 (MAEV…VGAC) and 47–106 (DKQE…PHMK). Position 2 is an N-acetylalanine (Ala-2). The segment covering 64 to 91 (PEAKRIRLEDGQENGKTEVAVESHERQV) has biased composition (basic and acidic residues). The segment covering 92–106 (PKRARGQNKSRPHMK) has biased composition (basic residues). 2 C3H1-type zinc fingers span residues 110–140 (YDKE…HDVG) and 148–178 (ADLG…HLGP). A Phosphoserine modification is found at Ser-267. FMN-binding positions include 301–303 (PLT) and Gln-355. The active-site Proton donor is Cys-386. Lys-406 participates in a covalent cross-link: Glycyl lysine isopeptide (Lys-Gly) (interchain with G-Cter in SUMO2). FMN-binding positions include Lys-425, His-455, 487–489 (NGD), and 510–511 (AR).

It belongs to the Dus family. Dus3 subfamily. It depends on FMN as a cofactor.

The enzyme catalyses 5,6-dihydrouridine(47) in tRNA + NAD(+) = uridine(47) in tRNA + NADH + H(+). It carries out the reaction 5,6-dihydrouridine(47) in tRNA + NADP(+) = uridine(47) in tRNA + NADPH + H(+). The catalysed reaction is a 5,6-dihydrouridine in mRNA + NAD(+) = a uridine in mRNA + NADH + H(+). It catalyses the reaction a 5,6-dihydrouridine in mRNA + NADP(+) = a uridine in mRNA + NADPH + H(+). Its function is as follows. Catalyzes the synthesis of dihydrouridine, a modified base, in various RNAs, such as tRNAs, mRNAs and some long non-coding RNAs (lncRNAs). Mainly modifies the uridine in position 47 (U47) in the D-loop of most cytoplasmic tRNAs. Also able to mediate the formation of dihydrouridine in some mRNAs, thereby regulating their translation. The chain is tRNA-dihydrouridine(47) synthase [NAD(P)(+)]-like from Rattus norvegicus (Rat).